Consider the following 129-residue polypeptide: uncharacterized protein (129 aa).

The helical transmembrane segment at 103-125 (AISSAFQYGLSTSNFFFIFLYIF) threads the bilayer.

Its subcellular location is the membrane. This is an uncharacterized protein from Acanthamoeba polyphaga (Amoeba).